The sequence spans 250 residues: 2,3-bisphosphoglycerate-dependent phosphoglycerate mutase (250 aa).

Residues 8–15 (RHGESKWN), 21–22 (TG), Arg60, 87–90 (ERHY), Lys98, 114–115 (RR), and 183–184 (GN) contribute to the substrate site. His9 functions as the Tele-phosphohistidine intermediate in the catalytic mechanism. Glu87 (proton donor/acceptor) is an active-site residue.

The protein belongs to the phosphoglycerate mutase family. BPG-dependent PGAM subfamily.

The catalysed reaction is (2R)-2-phosphoglycerate = (2R)-3-phosphoglycerate. It functions in the pathway carbohydrate degradation; glycolysis; pyruvate from D-glyceraldehyde 3-phosphate: step 3/5. Functionally, catalyzes the interconversion of 2-phosphoglycerate and 3-phosphoglycerate. This chain is 2,3-bisphosphoglycerate-dependent phosphoglycerate mutase, found in Borrelia recurrentis (strain A1).